The following is a 679-amino-acid chain: Glycine--tRNA ligase beta subunit (679 aa).

The protein belongs to the class-II aminoacyl-tRNA synthetase family. In terms of assembly, tetramer of two alpha and two beta subunits.

It localises to the cytoplasm. The enzyme catalyses tRNA(Gly) + glycine + ATP = glycyl-tRNA(Gly) + AMP + diphosphate. The chain is Glycine--tRNA ligase beta subunit from Streptococcus pyogenes serotype M12 (strain MGAS9429).